The chain runs to 466 residues: Soluble pyridine nucleotide transhydrogenase (466 aa).

Residue 36–45 (ERYQNVGGGC) coordinates FAD.

This sequence belongs to the class-I pyridine nucleotide-disulfide oxidoreductase family. As to quaternary structure, homooligomer; probable homooctamer. It depends on FAD as a cofactor.

It localises to the cytoplasm. It carries out the reaction NAD(+) + NADPH = NADH + NADP(+). Its function is as follows. Conversion of NADPH, generated by peripheral catabolic pathways, to NADH, which can enter the respiratory chain for energy generation. This is Soluble pyridine nucleotide transhydrogenase from Escherichia coli O157:H7.